The primary structure comprises 710 residues: Lactotransferrin (710 aa).

A signal peptide spans 1 to 19; it reads MKLVFLVLLFLGALGLCLA. The residue at position 10 (F10) is a Phosphoserine; alternate. F10 carries O-linked (GlcNAc) serine; alternate glycosylation. The interval 20–24 is critical for glycosaminoglycan, lipid A, lysozyme and DNA binding; that stretch reads GRRRS. Bactericidal and antifungal activity stretches follow at residues 20–29 and 39–49; these read GRRRSVQWCA and FQWQRNMRKVR. Residues 21–22 are important for full bactericidal and antifungal activities; sequence RR. Transferrin-like domains are found at residues 25–352 and 364–695; these read VQWC…NLRK and VVWC…NLKK. 2 disulfide bridges follow: C28/C64 and C38/C55. 2 interaction with PspA regions span residues 39 to 46 and 57 to 58; these read FQWQRNMR and KR. Residues 39 to 49 are interaction with lipopolysaccharide; it reads FQWQRNMRKVR. Positions 46 to 51 are involved in glycosaminoglycan binding; it reads RKVRGP. Residue D79 participates in Fe(3+) binding. K92 is an active-site residue. Position 111 (Y111) interacts with Fe(3+). Disulfide bonds link C134-C217, C176-C192, C189-C200, and C250-C264. The hydrogencarbonate site is built by T136, R140, A142, and G143. N-linked (GlcNAc...) asparagine glycosylation is present at N156. Position 211 (Y211) interacts with Fe(3+). A Fe(3+)-binding site is contributed by H272. S278 (nucleophile) is an active-site residue. Disulfide bonds link C367–C399 and C377–C390. Residues Q379 and S391 each participate in a glycyl lysine isopeptide (Lys-Gly) (interchain with G-Cter in ubiquitin) cross-link. Fe(3+) is bound by residues D414 and Y454. 8 disulfides stabilise this stretch: C424–C705, C446–C668, C478–C553, C502–C696, C512–C526, C523–C536, C594–C608, and C646–C651. Hydrogencarbonate-binding residues include T480, R484, A486, and G487. An N-linked (GlcNAc...) asparagine glycan is attached at N497. Residue Y547 participates in Fe(3+) binding. A Fe(3+)-binding site is contributed by H616. N-linked (GlcNAc...) asparagine glycosylation occurs at N642.

The protein belongs to the transferrin family. As to quaternary structure, monomer. Found in a complex with LTF, CLU, EPPIN and SEMG1. Found in a complex with MPO and LTF; interacts directly with CP, allows Fe(3+) incorporation into LTF and activation of CP ferroxidase activity. In terms of processing, phosphorylation at Ser-10 activates the transcriptional activity. Phosphorylation at Ser-10 also promotes proteasomal degradation. Alternatively can undergo O-GlcNAcylation at Ser-10. O-GlcNAcylation at Ser-10 inhibits DNA binding and negatively regulates the transcriptional activity. Alternatively can undergo phosphorylation at Ser-10. Post-translationally, poly-N-acetyllactosaminic carbohydrate moiety seems to be needed for TLR4 activation. High levels are found in saliva and tears, intermediate levels in serum and plasma, and low levels in urine. In kidney, detected in the distal collecting tubules in the medulla but not in the cortical region or in blood vessels. Detected in peripheral blood neutrophils (at protein level). Isoform 1 and isoform DeltaLf are expressed in breast, prostate, spleen, pancreas, kidney, small intestine, lung, skeletal muscle, uterus, thymus and fetal liver. Isoform 1 is expressed in brain, testis and peripheral blood leukocytes; isoform DeltaLf is barely detectable in these tissues. Isoform DeltaLf is expressed in placenta, liver and ovary; isoform 1 is barely detectable in these tissues. In kidney, isoform 1 is expressed at high levels in the collecting tubules of the medulla but at very low levels in the cortex.

The protein localises to the secreted. It is found in the cytoplasmic granule. Its subcellular location is the cytoplasm. The protein resides in the nucleus. Functionally, transferrins are iron binding transport proteins which can bind two Fe(3+) ions in association with the binding of an anion, usually bicarbonate. In terms of biological role, major iron-binding and multifunctional protein found in exocrine fluids such as breast milk and mucosal secretions. Has antimicrobial activity, which depends on the extracellular cation concentration. Antimicrobial properties include bacteriostasis, which is related to its ability to sequester free iron and thus inhibit microbial growth, as well as direct bactericidal properties leading to the release of lipopolysaccharides from the bacterial outer membrane. Can also prevent bacterial biofilm development in P.aeruginosa infection. Has weak antifungal activity against C.albicans. Has anabolic, differentiating and anti-apoptotic effects on osteoblasts and can also inhibit osteoclastogenesis, possibly playing a role in the regulation of bone growth. Promotes binding of species C adenoviruses to epithelial cells, promoting adenovirus infection. Can inhibit papillomavirus infections. Stimulates the TLR4 signaling pathway leading to NF-kappa-B activation and subsequent pro-inflammatory cytokine production while also interfering with the lipopolysaccharide (LPS)-stimulated TLR4 signaling. Inhibits neutrophil granulocyte migration to sites of apoptosis, when secreted by apoptotic cells. Stimulates VEGFA-mediated endothelial cell migration and proliferation. Binds heparin, chondroitin sulfate and possibly other glycosaminoglycans (GAGs). Also binds specifically to pneumococcal surface protein A (PspA), the lipid A portion of bacterial lipopolysaccharide (LPS), lysozyme and DNA. Its function is as follows. Lactoferricin binds to the bacterial surface and is crucial for the bactericidal functions. Has some antiviral activity against papillomavirus infection. N-terminal region shows strong antifungal activity against C.albicans. Contains two BBXB heparin-binding consensus sequences that appear to form the predominate functional GAG-binding site. Has antimicrobial activity and is able to permeabilize different ions through liposomal membranes. Functionally, has opioid antagonist activity. Shows preference for mu-receptor. In terms of biological role, has opioid antagonist activity. Shows higher degrees of preference for kappa-receptors than for mu-receptors. Its function is as follows. The lactotransferrin transferrin-like domain 1 functions as a serine protease of the peptidase S60 family that cuts arginine rich regions. This function contributes to the antimicrobial activity. Shows a preferential cleavage at -Arg-Ser-Arg-Arg-|- and -Arg-Arg-Ser-Arg-|-, and of Z-Phe-Arg-|-aminomethylcoumarin sites. Transcription factor with antiproliferative properties and ability to induce cell cycle arrest. Binds to the DeltaLf response element found in the SKP1, BAX, DCPS, and SELENOH promoters. This chain is Lactotransferrin, found in Homo sapiens (Human).